We begin with the raw amino-acid sequence, 116 residues long: Flagellar transcriptional regulator FlhD (116 aa).

Belongs to the FlhD family. As to quaternary structure, homodimer; disulfide-linked. Forms a heterohexamer composed of two FlhC and four FlhD subunits. Each FlhC binds a FlhD dimer, forming a heterotrimer, and a hexamer assembles by dimerization of two heterotrimers.

The protein resides in the cytoplasm. In terms of biological role, functions in complex with FlhC as a master transcriptional regulator that regulates transcription of several flagellar and non-flagellar operons by binding to their promoter region. Activates expression of class 2 flagellar genes, including fliA, which is a flagellum-specific sigma factor that turns on the class 3 genes. Also regulates genes whose products function in a variety of physiological pathways. This chain is Flagellar transcriptional regulator FlhD, found in Serratia proteamaculans (strain 568).